Here is a 598-residue protein sequence, read N- to C-terminus: Elongation factor 4 (598 aa).

A tr-type G domain is found at 4 to 186; that stretch reads KHIRNFSIIA…VIVRQIPPPE (183 aa). Residues 16-21 and 133-136 contribute to the GTP site; these read DHGKST and NKID.

The protein belongs to the TRAFAC class translation factor GTPase superfamily. Classic translation factor GTPase family. LepA subfamily.

The protein resides in the cell inner membrane. The catalysed reaction is GTP + H2O = GDP + phosphate + H(+). Its function is as follows. Required for accurate and efficient protein synthesis under certain stress conditions. May act as a fidelity factor of the translation reaction, by catalyzing a one-codon backward translocation of tRNAs on improperly translocated ribosomes. Back-translocation proceeds from a post-translocation (POST) complex to a pre-translocation (PRE) complex, thus giving elongation factor G a second chance to translocate the tRNAs correctly. Binds to ribosomes in a GTP-dependent manner. This is Elongation factor 4 from Pseudoalteromonas atlantica (strain T6c / ATCC BAA-1087).